The following is a 388-amino-acid chain: (S)-8-oxocitronellyl enol synthase ISY1 (388 aa).

NADP(+)-binding positions include 35 to 37 (TGI), 63 to 64 (RR), 81 to 82 (DV), 105 to 106 (TW), and Gln143. Active-site residues include Lys147 and Tyr178. Residues Tyr178, Ile205, and 212–214 (SMM) contribute to the NADP(+) site.

It belongs to the short-chain dehydrogenases/reductases (SDR) family.

The catalysed reaction is (S)-8-oxocitronellyl enol + NADP(+) = (6E)-8-oxogeranial + NADPH + H(+). It carries out the reaction (S)-8-oxocitronellyl enol + NAD(+) = (6E)-8-oxogeranial + NADH + H(+). Functionally, iridoid synthase that catalyzes the first step in generation of the iridoid ring scaffold using the linear monoterpene (6E)-8-oxogeranial as substrate. Iridoids comprise a large family of distinctive bicyclic monoterpenes that possess a wide range of pharmacological activities, including anticancer, anti-inflammatory, antifungal and antibacterial activities. Catalyzes the conversion of the linear monoterpene (6E)-8-oxogeranial to (S)-8-oxocitronellyl enol, a precursor of nepetalactones, which are metabolites that are both insect-repellent and have euphoric effect in cats. This chain is (S)-8-oxocitronellyl enol synthase ISY1, found in Nepeta racemosa (Catmint).